A 364-amino-acid chain; its full sequence is Aminomethyltransferase (364 aa).

This sequence belongs to the GcvT family. The glycine cleavage system is composed of four proteins: P, T, L and H.

It catalyses the reaction N(6)-[(R)-S(8)-aminomethyldihydrolipoyl]-L-lysyl-[protein] + (6S)-5,6,7,8-tetrahydrofolate = N(6)-[(R)-dihydrolipoyl]-L-lysyl-[protein] + (6R)-5,10-methylene-5,6,7,8-tetrahydrofolate + NH4(+). Its function is as follows. The glycine cleavage system catalyzes the degradation of glycine. In Shewanella halifaxensis (strain HAW-EB4), this protein is Aminomethyltransferase.